Reading from the N-terminus, the 432-residue chain is Meiotically up-regulated gene 134 protein (432 aa).

Belongs to the UPF0300 family.

It is found in the cytoplasm. The protein resides in the cell cortex. Functionally, has a role in meiosis. This Schizosaccharomyces pombe (strain 972 / ATCC 24843) (Fission yeast) protein is Meiotically up-regulated gene 134 protein (mug134).